The following is an 84-amino-acid chain: MPSANLHPIVLTGVIGLMLLIRLRCTFTSTFSLPPLVTLNQIIALSFCGLLLNSISRAERACYYNYSVDSSKQQHISISTPNGK.

The Lumenal portion of the chain corresponds to 1 to 4; that stretch reads MPSA. The chain crosses the membrane as a helical span at residues 5 to 25; the sequence is NLHPIVLTGVIGLMLLIRLRC. Residues 26–30 lie on the Cytoplasmic side of the membrane; the sequence is TFTST. Residues 31-51 traverse the membrane as a helical segment; it reads FSLPPLVTLNQIIALSFCGLL. The Lumenal segment spans residues 52–84; it reads LNSISRAERACYYNYSVDSSKQQHISISTPNGK.

The protein belongs to the carmovirus double gene block protein 2 family.

It localises to the host endoplasmic reticulum membrane. Cell-to-cell movement function. This is Double gene block protein 2 from Carnation mottle virus (isolate China/Shanghai) (CarMV).